Here is a 237-residue protein sequence, read N- to C-terminus: uncharacterized protein (237 aa).

A signal peptide spans 1–28 (MNRPLLSVAGSLFVAAWALYIFSCFQHG). The interval 52–96 (NARDTAAHPSDTADNTSGSSTTTDPRSHGNAPPAPVGGAAQTHTQ) is disordered. Residues 63–75 (TADNTSGSSTTTD) are compositionally biased toward polar residues.

This is an uncharacterized protein from Treponema pallidum (strain Nichols).